The sequence spans 120 residues: Vanadium-binding protein 2 (120 aa).

The N-terminal stretch at 1–20 (MSKVIFALVLVVVLVACINA) is a signal peptide. Residues 21–29 (TYVEFEEAY) constitute a propeptide that is removed on maturation. 9 cysteine pairs are disulfide-bonded: C34–C88, C38–C84, C42–C81, C48–C74, C52–C69, C56–C65, C92–C119, C97–C114, and C101–C111.

In terms of assembly, interacts with VIP1. In terms of tissue distribution, expressed in vanadocytes.

Its subcellular location is the cytoplasm. In terms of biological role, acts as a vanadium reductase which may form an electron transfer cascade in conjunction with NADPH and glutathione through thiol disulfide exchange reactions. Partial cleavage of its disulfide bonds results in the reduction of V(5+) to V(4+). Binds up to 24 V(4+) ions per protein at pH 7.5. Also binds Fe(3+) and Cu(2+) and, to a lesser extent, Co(2+), Zn(2+) and Ni(2+). This is Vanadium-binding protein 2 from Ascidia sydneiensis samea (Vanadium-rich ascidian).